A 605-amino-acid chain; its full sequence is Elongation factor 4 (605 aa).

A tr-type G domain is found at 5-187 (ALIRNFSIIA…AVVERIPPPK (183 aa)). GTP contacts are provided by residues 17 to 22 (DHGKST) and 134 to 137 (NKID).

The protein belongs to the TRAFAC class translation factor GTPase superfamily. Classic translation factor GTPase family. LepA subfamily.

It is found in the cell inner membrane. The catalysed reaction is GTP + H2O = GDP + phosphate + H(+). In terms of biological role, required for accurate and efficient protein synthesis under certain stress conditions. May act as a fidelity factor of the translation reaction, by catalyzing a one-codon backward translocation of tRNAs on improperly translocated ribosomes. Back-translocation proceeds from a post-translocation (POST) complex to a pre-translocation (PRE) complex, thus giving elongation factor G a second chance to translocate the tRNAs correctly. Binds to ribosomes in a GTP-dependent manner. The protein is Elongation factor 4 of Novosphingobium aromaticivorans (strain ATCC 700278 / DSM 12444 / CCUG 56034 / CIP 105152 / NBRC 16084 / F199).